The sequence spans 311 residues: HPr kinase/phosphorylase (311 aa).

Residues His-139 and Lys-160 contribute to the active site. An ATP-binding site is contributed by 154–161 (GKSGIGKS). Ser-161 lines the Mg(2+) pocket. Asp-178 (proton acceptor; for phosphorylation activity. Proton donor; for dephosphorylation activity) is an active-site residue. The segment at 201–210 (MEIRGLGIIN) is important for the catalytic mechanism of both phosphorylation and dephosphorylation. Glu-202 is a Mg(2+) binding site. Arg-245 is a catalytic residue. The important for the catalytic mechanism of dephosphorylation stretch occupies residues 266 to 271 (PISSGR).

The protein belongs to the HPrK/P family. In terms of assembly, homohexamer. The cofactor is Mg(2+).

The enzyme catalyses [HPr protein]-L-serine + ATP = [HPr protein]-O-phospho-L-serine + ADP + H(+). The catalysed reaction is [HPr protein]-O-phospho-L-serine + phosphate + H(+) = [HPr protein]-L-serine + diphosphate. Catalyzes the ATP- as well as the pyrophosphate-dependent phosphorylation of a specific serine residue in HPr, a phosphocarrier protein of the phosphoenolpyruvate-dependent sugar phosphotransferase system (PTS). HprK/P also catalyzes the pyrophosphate-producing, inorganic phosphate-dependent dephosphorylation (phosphorolysis) of seryl-phosphorylated HPr (P-Ser-HPr). The chain is HPr kinase/phosphorylase (hprK) from Mycoplasma genitalium (strain ATCC 33530 / DSM 19775 / NCTC 10195 / G37) (Mycoplasmoides genitalium).